Consider the following 626-residue polypeptide: Chaperone protein HtpG (626 aa).

Residues 1-339 form an a; substrate-binding region; that stretch reads MSTNQETRGF…SNDLPLNVSR (339 aa). A b region spans residues 340 to 555; it reads EILQDNKVTA…NDQMTTQMAK (216 aa). A c region spans residues 556-626; the sequence is LFAAAGQPVP…FIKRVNNLLG (71 aa).

The protein belongs to the heat shock protein 90 family. In terms of assembly, homodimer.

Its subcellular location is the cytoplasm. Its function is as follows. Molecular chaperone. Has ATPase activity. In Histophilus somni (strain 2336) (Haemophilus somnus), this protein is Chaperone protein HtpG.